A 119-amino-acid polypeptide reads, in one-letter code: MARVKRGVQARRRHKKILKQAKGYYGARSRVFRVAVQAVTKAGQYAYRDRKVRKRQFRRLWIVRINAAARLNGLSYSRLINGLKKASIDIDRKVLADIAVRDQATFSALAEKAKASLTA.

Belongs to the bacterial ribosomal protein bL20 family.

Functionally, binds directly to 23S ribosomal RNA and is necessary for the in vitro assembly process of the 50S ribosomal subunit. It is not involved in the protein synthesizing functions of that subunit. This is Large ribosomal subunit protein bL20 from Alcanivorax borkumensis (strain ATCC 700651 / DSM 11573 / NCIMB 13689 / SK2).